Consider the following 255-residue polypeptide: F-box/SPRY domain-containing protein 1 (255 aa).

The region spanning 3–51 is the F-box domain; that stretch reads DPVAALCNYNVLEVIFSYLELDDLSHCSQVCKSWYHFLNDENSDVWRWH. The B30.2/SPRY domain maps to 61–253; that stretch reads LKSDLLSSVS…VSMVYLGTPL (193 aa).

The protein belongs to the FBXO45/Fsn family. In terms of assembly, component of an E3 ubiquitin ligase complex composed of hiw and Fsn.

Its subcellular location is the synapse. It participates in protein modification; protein ubiquitination. Required in the presynaptic motoneuron to down-regulate the levels of wnd and restrain synaptic terminal growth at the neuromuscular junction (NMJ). The polypeptide is F-box/SPRY domain-containing protein 1 (Drosophila simulans (Fruit fly)).